The chain runs to 395 residues: Zinc finger protein 385D (395 aa).

Matrin-type zinc fingers lie at residues 80–110 (ISCN…KLKA), 204–234 (LYCS…MLEA), and 267–297 (FHCE…RASG). Residues 282 to 308 (LKQHISSRRHKDRASGKPPKPKYSPYN) form a disordered region.

The protein localises to the nucleus. In Rattus norvegicus (Rat), this protein is Zinc finger protein 385D (Znf385d).